The chain runs to 283 residues: Elongation factor Ts (283 aa).

Positions 80-83 are involved in Mg(2+) ion dislocation from EF-Tu; it reads TDFV.

Belongs to the EF-Ts family.

It localises to the cytoplasm. In terms of biological role, associates with the EF-Tu.GDP complex and induces the exchange of GDP to GTP. It remains bound to the aminoacyl-tRNA.EF-Tu.GTP complex up to the GTP hydrolysis stage on the ribosome. The polypeptide is Elongation factor Ts (Salmonella choleraesuis (strain SC-B67)).